Reading from the N-terminus, the 93-residue chain is uncharacterized protein (93 aa).

Helical transmembrane passes span 7–27 (LIFLGIILMFIGFFMITLGMI) and 70–90 (ILSVLIAILMIIWMFLFAFGI).

The protein localises to the cell membrane. This is an uncharacterized protein from Methanocaldococcus jannaschii (strain ATCC 43067 / DSM 2661 / JAL-1 / JCM 10045 / NBRC 100440) (Methanococcus jannaschii).